Reading from the N-terminus, the 108-residue chain is MADKYDVFDQLGELENTLNTTLTQISGIRQVLEASMTENATLRMELEKLRDRLAEFEKKEVKKETPKDQPNPNLIQIFNEGFHVCHLHYAERLAEGESCLDCLELLYR.

Zn(2+) contacts are provided by His83, Cys85, Cys99, and Cys102.

It belongs to the YabA family. In terms of assembly, homotetramer. Interacts with both DnaA and DnaN, acting as a bridge between these two proteins. Zn(2+) serves as cofactor.

The protein resides in the cytoplasm. It localises to the nucleoid. Its function is as follows. Involved in control of chromosome replication initiation. Inhibits the cooperative binding of DnaA to the oriC region, thus negatively regulating initiation of chromosome replication. Inhibits the ability of DnaA-ATP to form a helix on DNA; does not disassemble preformed DnaA-DNA helices. Decreases the residence time of DnaA on the chromosome at its binding sites (oriC, replication forks and promoter-binding sites). Tethers DnaA to the replication machinery via the DNA polymerase beta sliding clamp subunit (dnaN). Associates with oriC and other DnaA targets on the chromosome in a DnaA-dependent manner. In Lactococcus lactis subsp. cremoris (strain SK11), this protein is Replication initiation control protein YabA.